The primary structure comprises 223 residues: Peptidyl-prolyl cis-trans isomerase FKBP16-3, chloroplastic (223 aa).

A chloroplast-targeting transit peptide spans 1–36 (MAASSPSLLLPLGSASRNGLTTKNPNSSRYIAARVI). The transit peptide at 37–76 (ASETREQSCKISNLSSRREAMLLVLGVSGGLSMSSLAAYA) directs the protein to the thylakoid. Residues 124–216 (GFQVAANYVA…IFDVSLEFIP (93 aa)) enclose the PPIase FKBP-type domain.

This sequence belongs to the FKBP-type PPIase family.

The protein localises to the plastid. It localises to the chloroplast thylakoid lumen. The enzyme catalyses [protein]-peptidylproline (omega=180) = [protein]-peptidylproline (omega=0). In terms of biological role, PPIases accelerate the folding of proteins. It catalyzes the cis-trans isomerization of proline imidic peptide bonds in oligopeptides. The chain is Peptidyl-prolyl cis-trans isomerase FKBP16-3, chloroplastic (FKBP16-3) from Arabidopsis thaliana (Mouse-ear cress).